We begin with the raw amino-acid sequence, 269 residues long: Ribonuclease HII (269 aa).

The region spanning 83-269 (YLIAGVDEVG…HRMSFLTNIL (187 aa)) is the RNase H type-2 domain. A divalent metal cation-binding residues include aspartate 89, glutamate 90, and aspartate 185.

The protein belongs to the RNase HII family. The cofactor is Mn(2+). Mg(2+) serves as cofactor.

The protein resides in the cytoplasm. The enzyme catalyses Endonucleolytic cleavage to 5'-phosphomonoester.. Its function is as follows. Endonuclease that specifically degrades the RNA of RNA-DNA hybrids. This is Ribonuclease HII from Clostridium botulinum (strain Langeland / NCTC 10281 / Type F).